A 543-amino-acid polypeptide reads, in one-letter code: 2,3-bisphosphoglycerate-independent phosphoglycerate mutase (543 aa).

Mn(2+) is bound by residues aspartate 24 and serine 74. Serine 74 serves as the catalytic Phosphoserine intermediate. Residues histidine 135, 165–166, arginine 197, arginine 203, 268–271, and lysine 341 contribute to the substrate site; these read RD and RPDR. Residues aspartate 408, histidine 412, aspartate 449, histidine 450, and histidine 467 each coordinate Mn(2+).

This sequence belongs to the BPG-independent phosphoglycerate mutase family. Monomer. It depends on Mn(2+) as a cofactor.

It carries out the reaction (2R)-2-phosphoglycerate = (2R)-3-phosphoglycerate. The protein operates within carbohydrate degradation; glycolysis; pyruvate from D-glyceraldehyde 3-phosphate: step 3/5. Its function is as follows. Catalyzes the interconversion of 2-phosphoglycerate and 3-phosphoglycerate. The sequence is that of 2,3-bisphosphoglycerate-independent phosphoglycerate mutase from Parasynechococcus marenigrum (strain WH8102).